A 944-amino-acid polypeptide reads, in one-letter code: Probable UDP-N-acetylglucosamine--peptide N-acetylglucosaminyltransferase SPINDLY (944 aa).

11 TPR repeats span residues 34–67 (GTDALRYANILRSRNKFADALQLYTTVLDKDGAN), 68–101 (VEALIGKGICLQAQSLPRQALDCFTEAVKVDPKN), 102–135 (ACALTHCGMIYKDEGHLVEAAEAYQKARSADPSY), 143–176 (AIVLTDLGTSLKLAGNTEDGIQKYCEALEVDSHY), 177–210 (APAYYNLGVVYSEMMQFDVALTCYEKAALERPLY), 211–244 (AEAYCNMGVIYKNRGELDAAIACYDRCLTISPNF), 252–285 (AIALTDLGTKVKIEGDINQGVAYYKKALFYNWHY), 286–319 (ADAMYNLGVAYGEMLNFEMAIVFYELALHFNPRC), 320–353 (AEACNNLGVIYKDRDNLDKAVECYQMALSIKPNF), 355–387 (QSLNNLGVVYTVQGKMDAAASMIEKAILANPTY), and 388–421 (AEAYNNLGVLYRDAGSITLSVQAYERCLQIDPDS). Residues 422–944 (RNAGQNRLLA…RCEANGHSSR (523 aa)) form a catalytic region region. The interval 873–944 (NATAEEDNQS…RCEANGHSSR (72 aa)) is disordered. Polar residues predominate over residues 897–911 (PQPQIMVNGVTSPEG).

Belongs to the glycosyltransferase 41 family. O-GlcNAc transferase subfamily. In terms of tissue distribution, expressed in all parts of plants, including immature leaf blade, leaf sheath, mature leaf blade, roots, germinating embryos and aleurone layers.

It localises to the nucleus. It carries out the reaction L-seryl-[protein] + UDP-N-acetyl-alpha-D-glucosamine = 3-O-(N-acetyl-beta-D-glucosaminyl)-L-seryl-[protein] + UDP + H(+). The catalysed reaction is L-threonyl-[protein] + UDP-N-acetyl-alpha-D-glucosamine = 3-O-(N-acetyl-beta-D-glucosaminyl)-L-threonyl-[protein] + UDP + H(+). It participates in protein modification; protein glycosylation. Functionally, probable O-linked N-acetylglucosamine transferase (OGT) involved in various processes such as gibberellin (GA) signaling pathway. OGTs catalyze the addition of nucleotide-activated sugars directly onto the polypeptide through O-glycosidic linkage with the hydroxyl of serine or threonine. Probably acts by adding O-linked sugars to yet unknown proteins. This chain is Probable UDP-N-acetylglucosamine--peptide N-acetylglucosaminyltransferase SPINDLY (SPY), found in Hordeum vulgare (Barley).